The sequence spans 143 residues: Sec-independent protein translocase protein TatB (143 aa).

The chain crosses the membrane as a helical span at residues F2–G22. A disordered region spans residues F97–T143.

It belongs to the TatB family. In terms of assembly, the Tat system comprises two distinct complexes: a TatABC complex, containing multiple copies of TatA, TatB and TatC subunits, and a separate TatA complex, containing only TatA subunits. Substrates initially bind to the TatABC complex, which probably triggers association of the separate TatA complex to form the active translocon.

It is found in the cell membrane. Functionally, part of the twin-arginine translocation (Tat) system that transports large folded proteins containing a characteristic twin-arginine motif in their signal peptide across membranes. Together with TatC, TatB is part of a receptor directly interacting with Tat signal peptides. TatB may form an oligomeric binding site that transiently accommodates folded Tat precursor proteins before their translocation. The chain is Sec-independent protein translocase protein TatB from Rhodococcus opacus (strain B4).